The chain runs to 75 residues: Toxin-like peptide AaF1CA7 (75 aa).

The signal sequence occupies residues 1 to 22; sequence MMKLMLFSIIVILFSLIGSIHG. An LCN-type CS-alpha/beta domain is found at 25–75; the sequence is VPGNYPLDSSDDTYLCAPLGENPSCIQICRKHGVKYGYCYAFQCWCEYFGR. 3 cysteine pairs are disulfide-bonded: cysteine 40–cysteine 63, cysteine 49–cysteine 68, and cysteine 53–cysteine 70.

Belongs to the long (3 C-C) scorpion toxin superfamily. Expressed by the venom gland.

Its subcellular location is the secreted. Probable neurotoxin that inhibits ion channels. In Androctonus australis (Sahara scorpion), this protein is Toxin-like peptide AaF1CA7.